The primary structure comprises 224 residues: Uracil-DNA glycosylase (224 aa).

Catalysis depends on Asp62, which acts as the Proton acceptor.

It belongs to the uracil-DNA glycosylase (UDG) superfamily. UNG family.

It is found in the cytoplasm. It carries out the reaction Hydrolyzes single-stranded DNA or mismatched double-stranded DNA and polynucleotides, releasing free uracil.. Excises uracil residues from the DNA which can arise as a result of misincorporation of dUMP residues by DNA polymerase or due to deamination of cytosine. This is Uracil-DNA glycosylase from Aliivibrio fischeri (strain ATCC 700601 / ES114) (Vibrio fischeri).